Here is a 298-residue protein sequence, read N- to C-terminus: Probable GTP 3',8-cyclase (298 aa).

In terms of domain architecture, Radical SAM core spans 4–227 (RYGREIRSFR…MQNRKKYLID (224 aa)). Arginine 13 is a GTP binding site. Residues cysteine 20 and cysteine 24 each contribute to the [4Fe-4S] cluster site. Position 26 (tyrosine 26) interacts with S-adenosyl-L-methionine. Cysteine 27 serves as a coordination point for [4Fe-4S] cluster. Position 61 (lysine 61) interacts with GTP. Glycine 65 lines the S-adenosyl-L-methionine pocket. Position 91 (threonine 91) interacts with GTP. Serine 115 contributes to the S-adenosyl-L-methionine binding site. Lysine 152 serves as a coordination point for GTP. Residues cysteine 243 and cysteine 246 each coordinate [4Fe-4S] cluster. 248 to 250 (RIR) lines the GTP pocket. Cysteine 260 lines the [4Fe-4S] cluster pocket.

The protein belongs to the radical SAM superfamily. MoaA family. [4Fe-4S] cluster serves as cofactor.

The enzyme catalyses GTP + AH2 + S-adenosyl-L-methionine = (8S)-3',8-cyclo-7,8-dihydroguanosine 5'-triphosphate + 5'-deoxyadenosine + L-methionine + A + H(+). It participates in cofactor biosynthesis; molybdopterin biosynthesis. Functionally, catalyzes the cyclization of GTP to (8S)-3',8-cyclo-7,8-dihydroguanosine 5'-triphosphate. The protein is Probable GTP 3',8-cyclase of Methanococcus maripaludis (strain C5 / ATCC BAA-1333).